Reading from the N-terminus, the 529-residue chain is MTLSPYLKEVAKRRTFAIISHPDAGKTTITEKVLLFGQAIQTAGTVKGRGSNQHAKSDWMEMEKQRGISITTSVMQFPYHDCLVNLLDTPGHEDFSEDTYRTLTAVDCCLMVIDAAKGVEDRTRKLMEVTRLRDTPILTFMNKLDRDIRDPMELLDEVENELKIGCAPITWPIGCGKLFKGVYHLYKDETYLYQSGKGHTIQEVRIVKGLNNPDLDAAVGEDLAQQLRDELELVKGGSNEFDKELFLAGEITPVFFGTALGNFGVDHMLNGLVEWAPAPMPRQTDTRTVEASEDKFTGFVFKIQANMDPKHRDRVAFMRVVSGKYEKGMKLRQVRTAKDVVISDALTFMAGDRSHVEEAYPGDILGLHNHGTIQIGDTFTQGEMMKFTGIPNFAPELFRRIRLKDPLKQKQLLKGLVQLSEEGAVQVFRPISNNDLIVGAVGVLQFDVVVARLKSEYNVEAVYESVNVATARWVECADAKKFEEFKRKNESQLALDGGDNLAYIATSMVNLRLAQERYPDVQFHQTREH.

Residues 11-280 (AKRRTFAIIS…GLVEWAPAPM (270 aa)) form the tr-type G domain. GTP contacts are provided by residues 20–27 (SHPDAGKT), 88–92 (DTPGH), and 142–145 (NKLD).

It belongs to the TRAFAC class translation factor GTPase superfamily. Classic translation factor GTPase family. PrfC subfamily.

It is found in the cytoplasm. Functionally, increases the formation of ribosomal termination complexes and stimulates activities of RF-1 and RF-2. It binds guanine nucleotides and has strong preference for UGA stop codons. It may interact directly with the ribosome. The stimulation of RF-1 and RF-2 is significantly reduced by GTP and GDP, but not by GMP. This is Peptide chain release factor 3 from Shigella flexneri serotype 5b (strain 8401).